The sequence spans 523 residues: Pentatricopeptide repeat-containing protein At1g52640, mitochondrial (523 aa).

A mitochondrion-targeting transit peptide spans 1 to 5; it reads MAIRT. PPR repeat units lie at residues 101–135, 137–171, 172–206, 207–241, 242–276, 277–311, 312–346, 347–381, 382–416, and 417–452; these read SLES…NYFE, SSKV…GIKP, CVDD…GIVP, SAKT…NCVV, DLLA…GLKP, DAYS…DLVP, NVYT…GANP, DTWT…KCLP, DRHT…KFYP, and TVAT…GIPP. The interval 498–523 is disordered; sequence KRRRLGRRSENSEDDDDDFELERDTI. A compositionally biased stretch (acidic residues) spans 509–523; the sequence is SEDDDDDFELERDTI.

This sequence belongs to the PPR family. P subfamily.

The protein localises to the mitochondrion. The chain is Pentatricopeptide repeat-containing protein At1g52640, mitochondrial from Arabidopsis thaliana (Mouse-ear cress).